An 883-amino-acid polypeptide reads, in one-letter code: DNA mismatch repair protein MutS (883 aa).

The interval 1 to 25 (MSDSVAPDVPVIREGKNPAQHRDRT) is disordered. Over residues 11–25 (VIREGKNPAQHRDRT) the composition is skewed to basic and acidic residues. Residue 664–671 (GPNASGKS) participates in ATP binding. The disordered stretch occupies residues 857–883 (RKGNTQPRARKSSAETEAKTQQFELPF).

It belongs to the DNA mismatch repair MutS family.

Its function is as follows. This protein is involved in the repair of mismatches in DNA. It is possible that it carries out the mismatch recognition step. This protein has a weak ATPase activity. In Acaryochloris marina (strain MBIC 11017), this protein is DNA mismatch repair protein MutS.